A 213-amino-acid polypeptide reads, in one-letter code: Uridine kinase (213 aa).

ATP is bound at residue 13-20; sequence GASASGKS.

The protein belongs to the uridine kinase family.

It localises to the cytoplasm. It carries out the reaction uridine + ATP = UMP + ADP + H(+). The catalysed reaction is cytidine + ATP = CMP + ADP + H(+). Its pathway is pyrimidine metabolism; CTP biosynthesis via salvage pathway; CTP from cytidine: step 1/3. It participates in pyrimidine metabolism; UMP biosynthesis via salvage pathway; UMP from uridine: step 1/1. This chain is Uridine kinase, found in Haemophilus influenzae (strain PittGG).